A 156-amino-acid chain; its full sequence is Putative type II restriction enzyme ApeKORF2002P (156 aa).

To M.jannaschii MJ1199.

The enzyme catalyses Endonucleolytic cleavage of DNA to give specific double-stranded fragments with terminal 5'-phosphates.. Functionally, a putative type II restriction enzyme, its methylase would be APE_2002. In Aeropyrum pernix (strain ATCC 700893 / DSM 11879 / JCM 9820 / NBRC 100138 / K1), this protein is Putative type II restriction enzyme ApeKORF2002P.